Here is a 635-residue protein sequence, read N- to C-terminus: CCR4-NOT transcription complex subunit 10 (635 aa).

Position 45 is a phosphothreonine (threonine 45). The stretch at leucine 131–alanine 165 forms a coiled coil. Disordered regions lie at residues glutamate 396–glycine 416 and serine 450–phenylalanine 474. Residues proline 456–glutamine 470 show a composition bias toward basic and acidic residues.

It belongs to the CNOT10 family. Component of the CCR4-NOT complex. CNOT10 and CNOT11 form a subcomplex docked to the CNOT1 scaffold.

It is found in the cytoplasm. It localises to the nucleus. Component of the CCR4-NOT complex which is one of the major cellular mRNA deadenylases and is linked to various cellular processes including bulk mRNA degradation, miRNA-mediated repression, translational repression during translational initiation and general transcription regulation. Additional complex functions may be a consequence of its influence on mRNA expression. Is not required for association of CNOT7 to the CCR4-NOT complex. The chain is CCR4-NOT transcription complex subunit 10 (Not10) from Drosophila melanogaster (Fruit fly).